Here is a 254-residue protein sequence, read N- to C-terminus: Glutathione S-transferase U12 (254 aa).

The Nuclear localization signal motif lies at 19-23 (KKRKK). The region spanning 33–114 (TTVKLIGTWA…YVDESWPSDL (82 aa)) is the GST N-terminal domain. Glutathione-binding positions include 43–44 (SP), 71–72 (GK), 85–86 (KV), and 98–99 (ES). The GST C-terminal domain occupies 120–252 (LPSERAFARF…EFIEFAKKKF (133 aa)).

The protein belongs to the GST superfamily. Tau family.

The protein resides in the nucleus. The enzyme catalyses RX + glutathione = an S-substituted glutathione + a halide anion + H(+). Functionally, may be involved in the conjugation of reduced glutathione to a wide number of exogenous and endogenous hydrophobic electrophiles and have a detoxification role against certain herbicides. The protein is Glutathione S-transferase U12 (GSTU12) of Arabidopsis thaliana (Mouse-ear cress).